The chain runs to 357 residues: 3-isopropylmalate dehydrogenase (357 aa).

Residues Arg-97, Arg-107, Arg-135, and Asp-224 each contribute to the substrate site. 3 residues coordinate Mg(2+): Asp-224, Asp-248, and Asp-252. 282-294 (GSAPDIAGQDKAN) provides a ligand contact to NAD(+).

Belongs to the isocitrate and isopropylmalate dehydrogenases family. LeuB type 1 subfamily. Homodimer. The cofactor is Mg(2+). Mn(2+) is required as a cofactor.

It is found in the cytoplasm. It carries out the reaction (2R,3S)-3-isopropylmalate + NAD(+) = 4-methyl-2-oxopentanoate + CO2 + NADH. Its pathway is amino-acid biosynthesis; L-leucine biosynthesis; L-leucine from 3-methyl-2-oxobutanoate: step 3/4. In terms of biological role, catalyzes the oxidation of 3-carboxy-2-hydroxy-4-methylpentanoate (3-isopropylmalate) to 3-carboxy-4-methyl-2-oxopentanoate. The product decarboxylates to 4-methyl-2 oxopentanoate. The chain is 3-isopropylmalate dehydrogenase from Parasynechococcus marenigrum (strain WH8102).